A 301-amino-acid polypeptide reads, in one-letter code: Ubiquinone biosynthesis protein COQ4, mitochondrial (301 aa).

The N-terminal 46 residues, 1–46 (MEVTLKRSAALARQTTPLLRPLRPVATYPSNNNNNNNPTPQQRRPY), are a transit peptide targeting the mitochondrion. The interval 14–48 (QTTPLLRPLRPVATYPSNNNNNNNPTPQQRRPYSL) is disordered. Residues 38-48 (PTPQQRRPYSL) are compositionally biased toward polar residues. Zn(2+) contacts are provided by H185, D186, H189, and E201.

The protein belongs to the COQ4 family. As to quaternary structure, component of a multi-subunit COQ enzyme complex, composed of at least COQ3, COQ4, COQ5, COQ6, COQ7 and COQ9. It depends on Zn(2+) as a cofactor.

Its subcellular location is the mitochondrion inner membrane. The enzyme catalyses a 4-hydroxy-3-methoxy-5-(all-trans-polyprenyl)benzoate + H(+) = a 2-methoxy-6-(all-trans-polyprenyl)phenol + CO2. It participates in cofactor biosynthesis; ubiquinone biosynthesis. Functionally, lyase that catalyzes the C1-decarboxylation of 4-hydroxy-3-methoxy-5-(all-trans-polyprenyl)benzoic acid into 2-methoxy-6-(all-trans-polyprenyl)phenol during ubiquinone biosynthesis. The protein is Ubiquinone biosynthesis protein COQ4, mitochondrial of Podospora anserina (strain S / ATCC MYA-4624 / DSM 980 / FGSC 10383) (Pleurage anserina).